The sequence spans 86 residues: Small ribosomal subunit protein bS20 (86 aa).

Residues 1-11 (MANIKQQKKRN) are compositionally biased toward basic residues. The interval 1–21 (MANIKQQKKRNKTNEKRRLQN) is disordered.

The protein belongs to the bacterial ribosomal protein bS20 family.

In terms of biological role, binds directly to 16S ribosomal RNA. The polypeptide is Small ribosomal subunit protein bS20 (Onion yellows phytoplasma (strain OY-M)).